We begin with the raw amino-acid sequence, 1431 residues long: 1-phosphatidylinositol 4,5-bisphosphate phosphodiesterase beta egl-8 (1431 aa).

One can recognise a PI-PLC X-box domain in the interval 340–491 (MDMDQPLCHY…LRKKILIKNK (152 aa)). The active site involves His355. Ca(2+) contacts are provided by Asn356, Glu385, and Asp387. The active site involves His403. Ca(2+) is bound at residue Glu437. Residues Lys489 and Lys491 each coordinate substrate. 2 disordered regions span residues 510–601 (KLDE…MVPD) and 632–692 (RRQS…SGPS). The span at 543 to 556 (EEVDDDTSDDDDDP) shows a compositional bias: acidic residues. Composition is skewed to low complexity over residues 572–586 (NTTS…ARSS), 652–661 (SSSSPATPSI), and 668–692 (ATSS…SGPS). The PI-PLC Y-box domain occupies 758–874 (LSSLVNYTHP…GYLLKPDFLR (117 aa)). Residues Ser787 and Arg814 each contribute to the substrate site. The region spanning 877–1002 (DRTFDPFSES…SLRSDTNQSF (126 aa)) is the C2 domain. Disordered regions lie at residues 1072 to 1119 (QPPR…VAVD), 1150 to 1176 (DLRK…SSIA), and 1188 to 1216 (NNRR…SASG). The segment covering 1074 to 1113 (PRQNGSSADLLANNGQTGSARGDQTSSMASSTIRSPNEQP) has biased composition (polar residues). Positions 1135 to 1166 (KAFAKLLKRFQKELDDLRKKHQKQRDSIQKQQ) form a coiled coil. The span at 1150–1162 (DLRKKHQKQRDSI) shows a compositional bias: basic and acidic residues. Positions 1191–1200 (RSTKKEKGSR) are enriched in basic residues. The segment covering 1204–1216 (TASVSSGCGSASG) has biased composition (low complexity). Coiled coils occupy residues 1288–1318 (DEEE…KNQM) and 1368–1402 (EKNL…QLEQ).

Ca(2+) serves as cofactor. Expressed in most or all neurons with high expression in the head and tail ganglia and low expression in the motor neurons of the ventral cord. Expressed in the intestine (at protein level). In males, expressed in vas deferens, spicule protractor muscles, diagonal muscles and a male-specific neuron.

It localises to the perikaryon. The protein resides in the cell projection. The protein localises to the axon. It is found in the synapse. Its subcellular location is the cell junction. It localises to the adherens junction. The catalysed reaction is a 1,2-diacyl-sn-glycero-3-phospho-(1D-myo-inositol-4,5-bisphosphate) + H2O = 1D-myo-inositol 1,4,5-trisphosphate + a 1,2-diacyl-sn-glycerol + H(+). Its function is as follows. Mediates the production of the second messenger molecules diacylglycerol (DAG) and inositol 1,4,5-trisphosphate (IP3) which plays an important role in the regulation of intracellular signaling cascades. Required in the nervous system to modulate neuronal activity. Facilitates synaptic transmission at neuromuscular junctions by regulating the release of acetylcholine from the motor neurons and thus affecting locomotion. Plays a role in efficient egg laying and defecation. Involved in axon regeneration after injury. Plays a role in male mating behavior by regulating spicule insertion and sperm transfer. By triggering Ca(2+) transient via IP3-mediated activation of IPR3 receptor itr-1 in ASH sensory neurons, regulates avoidance behavior in response to nose touch. By activating tpa-1 via DAG production, required for the expression of antimicrobial peptide nlp-29 in response to fungal infection. During embryogenesis, may play a role in epidermal morphogenesis together with plc-1. This is 1-phosphatidylinositol 4,5-bisphosphate phosphodiesterase beta egl-8 from Caenorhabditis elegans.